We begin with the raw amino-acid sequence, 86 residues long: Photosystem I reaction center subunit PsaK (86 aa).

A run of 2 helical transmembrane segments spans residues 15-35 (SWSI…IGLG) and 57-77 (GLPE…GAII).

This sequence belongs to the PsaG/PsaK family.

It localises to the plastid. The protein localises to the chloroplast thylakoid membrane. The chain is Photosystem I reaction center subunit PsaK from Gracilaria tenuistipitata var. liui (Red alga).